Reading from the N-terminus, the 578-residue chain is Frizzled and smoothened-like protein Q (578 aa).

An N-terminal signal peptide occupies residues 1–23 (MKNSFLINILIIYYLFIILFVNS). The Extracellular portion of the chain corresponds to 24–233 (QDLKLGGSCE…GKTKILDRTN (210 aa)). The 131-residue stretch at 27–157 (KLGGSCELID…GAPMFPINST (131 aa)) folds into the FZ domain. Cystine bridges form between cysteine 32-cysteine 95, cysteine 41-cysteine 88, cysteine 79-cysteine 128, and cysteine 121-cysteine 141. Asparagine 46, asparagine 64, asparagine 99, and asparagine 104 each carry an N-linked (GlcNAc...) asparagine glycan. N-linked (GlcNAc...) asparagine glycans are attached at residues asparagine 144, asparagine 155, asparagine 181, and asparagine 233. The helical transmembrane segment at 234–254 (YTLTSISFITCIFMILTFGVL) threads the bilayer. Topologically, residues 255 to 261 (PNKITHR) are cytoplasmic. A helical transmembrane segment spans residues 262-282 (MESILSFACGGCITALSLFIQ). Residues 283-305 (SRQDNFNCSSDPGRFKSQSDYLC) lie on the Extracellular side of the membrane. The N-linked (GlcNAc...) asparagine glycan is linked to asparagine 289. A helical transmembrane segment spans residues 306–326 (LLTGLIFQFGAITSIFWSPMI). At 327 to 341 (AYDFYITSTLGKIRK) the chain is on the cytoplasmic side. A helical membrane pass occupies residues 342–362 (FGLYRIVLWSFIFVLTALPAF). The Extracellular portion of the chain corresponds to 363–388 (GGKYSATVATNCWINSDDGSAWQYVS). Residues 389–409 (FYIPSWCAMGLICLFSILSVI) traverse the membrane as a helical segment. Topologically, residues 410–422 (NVSKMYIQTPNNR) are cytoplasmic. A helical transmembrane segment spans residues 423–443 (ILFFNIKILITLLLFLFVLTF). Residues 444-490 (ASSLKFYMEERMDTYFDAIAVWVECIGKGDPSQCELHAPGYDLKALN) lie on the Extracellular side of the membrane. The chain crosses the membrane as a helical span at residues 491–511 (IVVIGILGFTVFIGYGLDPIV). The Cytoplasmic segment spans residues 512–578 (IHIWMESKKF…LKSTEINQQP (67 aa)). Low complexity predominate over residues 544 to 556 (NNNNNETASTSSG). The tract at residues 544 to 578 (NNNNNETASTSSGNERKQTTVKMSNLKSTEINQQP) is disordered. Polar residues predominate over residues 563–578 (TVKMSNLKSTEINQQP).

Belongs to the G-protein coupled receptor Fz/Smo family.

Its subcellular location is the membrane. In Dictyostelium discoideum (Social amoeba), this protein is Frizzled and smoothened-like protein Q (fslQ).